The following is a 285-amino-acid chain: Cell division protein ZipA (285 aa).

Position 1 (Met1) is a topological domain, periplasmic. Residues 2-22 form a helical membrane-spanning segment; that stretch reads EIGLREWLIVIGIVVIGGILF. Residues 23–285 are Cytoplasmic-facing; that stretch reads DGWRRMRGSK…FERRQLTHKR (263 aa). A disordered region spans residues 49–88; that stretch reads AVSENSELLGPSRSVDFPQGAGFEPDEENLPSLSVRGPSR.

This sequence belongs to the ZipA family. In terms of assembly, interacts with FtsZ via their C-terminal domains.

Its subcellular location is the cell inner membrane. Functionally, essential cell division protein that stabilizes the FtsZ protofilaments by cross-linking them and that serves as a cytoplasmic membrane anchor for the Z ring. Also required for the recruitment to the septal ring of downstream cell division proteins. The protein is Cell division protein ZipA of Azotobacter vinelandii (strain DJ / ATCC BAA-1303).